Here is a 93-residue protein sequence, read N- to C-terminus: Alpha-defensin 22 (93 aa).

An N-terminal signal peptide occupies residues 1–19 (MKKLVLLSALVLLAYQVQT). The propeptide occupies 20-58 (DPIQNTDEETNTEEQPGEEDQAVSVSFGGQEGSALHEKL). Residues 22–41 (IQNTDEETNTEEQPGEEDQA) are disordered. Positions 25–40 (TDEETNTEEQPGEEDQ) are enriched in acidic residues. Disulfide bonds link cysteine 64–cysteine 89, cysteine 66–cysteine 81, and cysteine 71–cysteine 88.

This sequence belongs to the alpha-defensin family.

The protein localises to the secreted. May have microbicidal activities. This chain is Alpha-defensin 22 (Defa22), found in Mus musculus (Mouse).